Reading from the N-terminus, the 584-residue chain is DNA mismatch repair protein MutL (584 aa).

This sequence belongs to the DNA mismatch repair MutL/HexB family.

In terms of biological role, this protein is involved in the repair of mismatches in DNA. It is required for dam-dependent methyl-directed DNA mismatch repair. May act as a 'molecular matchmaker', a protein that promotes the formation of a stable complex between two or more DNA-binding proteins in an ATP-dependent manner without itself being part of a final effector complex. This Buchnera aphidicola subsp. Acyrthosiphon pisum (strain Tuc7) protein is DNA mismatch repair protein MutL.